Here is a 399-residue protein sequence, read N- to C-terminus: uncharacterized protein (399 aa).

Residues Glu-197 to Ser-206 are compositionally biased toward polar residues. Residues Glu-197–Glu-224 are disordered. A compositionally biased stretch (acidic residues) spans Glu-207–Glu-224.

This is an uncharacterized protein from Diadromus pulchellus (Parasitic wasp).